Here is a 331-residue protein sequence, read N- to C-terminus: Dioxygenase swnH2 (331 aa).

The segment covering 1-11 has biased composition (polar residues); it reads MINSDAQSAQK. The disordered stretch occupies residues 1–31; the sequence is MINSDAQSAQKQVEVEKPDEKYSAPRLLPPI. Over residues 13-23 the composition is skewed to basic and acidic residues; the sequence is VEVEKPDEKYS. Fe cation contacts are provided by His173, Asp175, and His250.

This sequence belongs to the PhyH family. As to quaternary structure, homodimer. Fe cation serves as cofactor.

It participates in mycotoxin biosynthesis. Functionally, dioxygenase; part of the gene cluster that mediates the biosynthesis of swainsonine (SW), a cytotoxic fungal alkaloid and a potential cancer therapy drug. Swainsonine production occurs via a multibranched pathway and is dispensable for fungal colonization of plants and infection of insect hosts. The first step of swainsonine biosynthesis is the production of the precursor pipecolic acid (PA) via conversion of L-lysine (Lys) to 1-piperideine-6-carboxylate (P6C) by the aminotransferase swnA, the latter being further reduced to PA by the reductase swnR. PA can be converted from lysine by both the SW biosynthetic cluster and the unclustered genes such as lysine cyclodeaminase. The PKS-NRPS hybrid synthetase swnK uptakes and condensates PA and malonyl-CoA with and without skipping of the ketoreductase (KR) domain in order to produce 3 intermediates, 1-oxoindolizidine, (1S)-1-hydroxyindolizin, and (1R)-1-hydroxyindolizine; with the transisomer (1S)-1-hydroxyindolizin being predominant. The terminal thioester reductase (TE) domain of swnK is involved in reduction of the thioester bond to release the intermediate aldehydes. The oxidoreductase swnN could contribute to the reduction of 1-oxoindolizidine to (1S)-1-hydroxyindolizin and (1R)-1-hydroxyindolizine, contributing to the major route of SW production. The dioxygenase swnH2 would be responsible for the oxidization of (1R)-1-hydroxyindolizine into (1R,2S)-1,2-dihydroxyindolizine and of (1S)-1-hydroxyindolizin to yield both (1R,2S)-1,2-dihydroxyindolizine and (1S,2S)-1,2-dihydroxyindolizine. The dioxygenase swnH1 then performs the conversion of the 1,2-dihydroxyindolizine epimers to SW. This chain is Dioxygenase swnH2, found in Metarhizium robertsii (strain ARSEF 23 / ATCC MYA-3075) (Metarhizium anisopliae (strain ARSEF 23)).